The primary structure comprises 160 residues: Phosphopantetheine adenylyltransferase (160 aa).

Ser-10 contributes to the substrate binding site. Residues 10 to 11 (SF) and His-18 contribute to the ATP site. Residues Lys-42, Thr-74, and Arg-88 each contribute to the substrate site. Residues 89-91 (GLR), Glu-99, and 124-130 (FYYISSR) each bind ATP.

This sequence belongs to the bacterial CoaD family. In terms of assembly, homohexamer. Mg(2+) is required as a cofactor.

The protein localises to the cytoplasm. The enzyme catalyses (R)-4'-phosphopantetheine + ATP + H(+) = 3'-dephospho-CoA + diphosphate. Its pathway is cofactor biosynthesis; coenzyme A biosynthesis; CoA from (R)-pantothenate: step 4/5. Reversibly transfers an adenylyl group from ATP to 4'-phosphopantetheine, yielding dephospho-CoA (dPCoA) and pyrophosphate. This Bdellovibrio bacteriovorus (strain ATCC 15356 / DSM 50701 / NCIMB 9529 / HD100) protein is Phosphopantetheine adenylyltransferase.